A 72-amino-acid polypeptide reads, in one-letter code: MAKEDNIEMQGTVLDTLPNTMFRVELENGHVVTAHISGKMRKNYIRILTGDKVTVELTPYDLSKGRIVFRSR.

In terms of domain architecture, S1-like spans 1-72 (MAKEDNIEMQ…SKGRIVFRSR (72 aa)).

The protein belongs to the IF-1 family. Component of the 30S ribosomal translation pre-initiation complex which assembles on the 30S ribosome in the order IF-2 and IF-3, IF-1 and N-formylmethionyl-tRNA(fMet); mRNA recruitment can occur at any time during PIC assembly.

It is found in the cytoplasm. In terms of biological role, one of the essential components for the initiation of protein synthesis. Stabilizes the binding of IF-2 and IF-3 on the 30S subunit to which N-formylmethionyl-tRNA(fMet) subsequently binds. Helps modulate mRNA selection, yielding the 30S pre-initiation complex (PIC). Upon addition of the 50S ribosomal subunit IF-1, IF-2 and IF-3 are released leaving the mature 70S translation initiation complex. This Sodalis glossinidius (strain morsitans) protein is Translation initiation factor IF-1.